We begin with the raw amino-acid sequence, 132 residues long: Aspartate 1-decarboxylase (132 aa).

Ser25 serves as the catalytic Schiff-base intermediate with substrate; via pyruvic acid. At Ser25 the chain carries Pyruvic acid (Ser). Thr57 provides a ligand contact to substrate. Tyr58 acts as the Proton donor in catalysis. Position 73 to 75 (73 to 75) interacts with substrate; it reads GAA.

The protein belongs to the PanD family. In terms of assembly, heterooctamer of four alpha and four beta subunits. The cofactor is pyruvate. Is synthesized initially as an inactive proenzyme, which is activated by self-cleavage at a specific serine bond to produce a beta-subunit with a hydroxyl group at its C-terminus and an alpha-subunit with a pyruvoyl group at its N-terminus.

The protein localises to the cytoplasm. It catalyses the reaction L-aspartate + H(+) = beta-alanine + CO2. It participates in cofactor biosynthesis; (R)-pantothenate biosynthesis; beta-alanine from L-aspartate: step 1/1. In terms of biological role, catalyzes the pyruvoyl-dependent decarboxylation of aspartate to produce beta-alanine. The sequence is that of Aspartate 1-decarboxylase from Pelotomaculum thermopropionicum (strain DSM 13744 / JCM 10971 / SI).